We begin with the raw amino-acid sequence, 197 residues long: Putative manganese efflux pump MntP (197 aa).

6 helical membrane-spanning segments follow: residues 8 to 28 (VILL…GLGA), 43 to 63 (VYAA…GYLL), 66 to 86 (VLLG…LIVL), 123 to 143 (LAIA…LLAL), 146 to 166 (WLAC…GIYL), and 177 to 197 (KAEI…MLFS).

This sequence belongs to the MntP (TC 9.B.29) family.

The protein localises to the cell inner membrane. Functionally, probably functions as a manganese efflux pump. This chain is Putative manganese efflux pump MntP, found in Psychrobacter arcticus (strain DSM 17307 / VKM B-2377 / 273-4).